The sequence spans 427 residues: Adenylosuccinate synthetase (427 aa).

GTP-binding positions include 12–18 (GDEGKGK) and 40–42 (GHT). Residue aspartate 13 is the Proton acceptor of the active site. Mg(2+) contacts are provided by aspartate 13 and glycine 40. IMP contacts are provided by residues 13–16 (DEGK), 38–41 (NAGH), threonine 128, arginine 142, glutamine 223, threonine 238, and arginine 302. Catalysis depends on histidine 41, which acts as the Proton donor. 298 to 304 (TTTGRPR) serves as a coordination point for substrate. GTP-binding positions include arginine 304, 330–332 (SID), and 412–414 (SVG).

It belongs to the adenylosuccinate synthetase family. In terms of assembly, homodimer. Mg(2+) serves as cofactor.

It localises to the cytoplasm. It catalyses the reaction IMP + L-aspartate + GTP = N(6)-(1,2-dicarboxyethyl)-AMP + GDP + phosphate + 2 H(+). The protein operates within purine metabolism; AMP biosynthesis via de novo pathway; AMP from IMP: step 1/2. Plays an important role in the de novo pathway of purine nucleotide biosynthesis. Catalyzes the first committed step in the biosynthesis of AMP from IMP. The sequence is that of Adenylosuccinate synthetase from Staphylococcus aureus (strain MW2).